Consider the following 1403-residue polypeptide: DNA-directed RNA polymerase subunit beta' (1403 aa).

The Zn(2+) site is built by cysteine 70, cysteine 72, cysteine 85, and cysteine 88. The Mg(2+) site is built by aspartate 461, aspartate 463, and aspartate 465. The segment at 687 to 708 (QQISQEETTGDRDGKRETRKQP) is disordered. Over residues 695–706 (TGDRDGKRETRK) the composition is skewed to basic and acidic residues. Residues cysteine 805, cysteine 879, cysteine 886, and cysteine 889 each coordinate Zn(2+). The disordered stretch occupies residues 1381–1403 (THGDTGPLGEPSRPVGTQTTGAA).

The protein belongs to the RNA polymerase beta' chain family. In terms of assembly, the RNAP catalytic core consists of 2 alpha, 1 beta, 1 beta' and 1 omega subunit. When a sigma factor is associated with the core the holoenzyme is formed, which can initiate transcription. It depends on Mg(2+) as a cofactor. Zn(2+) is required as a cofactor.

The catalysed reaction is RNA(n) + a ribonucleoside 5'-triphosphate = RNA(n+1) + diphosphate. Its function is as follows. DNA-dependent RNA polymerase catalyzes the transcription of DNA into RNA using the four ribonucleoside triphosphates as substrates. This is DNA-directed RNA polymerase subunit beta' from Myxococcus xanthus (strain DK1622).